The primary structure comprises 443 residues: Exodeoxyribonuclease 7 large subunit (443 aa).

This sequence belongs to the XseA family. Heterooligomer composed of large and small subunits.

It localises to the cytoplasm. It carries out the reaction Exonucleolytic cleavage in either 5'- to 3'- or 3'- to 5'-direction to yield nucleoside 5'-phosphates.. In terms of biological role, bidirectionally degrades single-stranded DNA into large acid-insoluble oligonucleotides, which are then degraded further into small acid-soluble oligonucleotides. The polypeptide is Exodeoxyribonuclease 7 large subunit (Legionella pneumophila (strain Corby)).